The primary structure comprises 135 residues: Nucleoside diphosphate kinase (135 aa).

ATP contacts are provided by K10, F58, R86, T92, R103, and N113. Residue H116 is the Pros-phosphohistidine intermediate of the active site.

Belongs to the NDK family. As to quaternary structure, homotetramer. It depends on Mg(2+) as a cofactor.

The protein localises to the cytoplasm. It carries out the reaction a 2'-deoxyribonucleoside 5'-diphosphate + ATP = a 2'-deoxyribonucleoside 5'-triphosphate + ADP. The catalysed reaction is a ribonucleoside 5'-diphosphate + ATP = a ribonucleoside 5'-triphosphate + ADP. Functionally, major role in the synthesis of nucleoside triphosphates other than ATP. The ATP gamma phosphate is transferred to the NDP beta phosphate via a ping-pong mechanism, using a phosphorylated active-site intermediate. This is Nucleoside diphosphate kinase from Nocardioides sp. (strain ATCC BAA-499 / JS614).